The primary structure comprises 80 residues: Small ribosomal subunit protein uS17 (80 aa).

It belongs to the universal ribosomal protein uS17 family. In terms of assembly, part of the 30S ribosomal subunit.

One of the primary rRNA binding proteins, it binds specifically to the 5'-end of 16S ribosomal RNA. The sequence is that of Small ribosomal subunit protein uS17 from Cereibacter sphaeroides (strain ATCC 17029 / ATH 2.4.9) (Rhodobacter sphaeroides).